Here is a 357-residue protein sequence, read N- to C-terminus: GPI mannosyltransferase 2 (357 aa).

The next 8 membrane-spanning stretches (helical) occupy residues 6 to 26 (TLIV…LVVP), 86 to 106 (AIAY…ALML), 128 to 148 (ILSP…FALL), 167 to 187 (VLGA…PFLF), 201 to 221 (GVSV…TQYL), 257 to 277 (YWTA…YLMY), 286 to 306 (LVPF…MWHV), and 334 to 354 (YVVR…GAYL).

The protein belongs to the PIGV family.

It localises to the endoplasmic reticulum membrane. It participates in glycolipid biosynthesis; glycosylphosphatidylinositol-anchor biosynthesis. Functionally, mannosyltransferase involved in glycosylphosphatidylinositol-anchor biosynthesis. Transfers the second mannose to the glycosylphosphatidylinositol during GPI precursor assembly. The sequence is that of GPI mannosyltransferase 2 (GPI18) from Yarrowia lipolytica (strain CLIB 122 / E 150) (Yeast).